Here is a 180-residue protein sequence, read N- to C-terminus: tRNA (cytidine(56)-2'-O)-methyltransferase (180 aa).

Residue Leu85 coordinates S-adenosyl-L-methionine.

Belongs to the aTrm56 family. In terms of assembly, homodimer.

It localises to the cytoplasm. The catalysed reaction is cytidine(56) in tRNA + S-adenosyl-L-methionine = 2'-O-methylcytidine(56) in tRNA + S-adenosyl-L-homocysteine + H(+). Its function is as follows. Specifically catalyzes the AdoMet-dependent 2'-O-ribose methylation of cytidine at position 56 in tRNAs. The polypeptide is tRNA (cytidine(56)-2'-O)-methyltransferase (Methanobrevibacter smithii (strain ATCC 35061 / DSM 861 / OCM 144 / PS)).